The chain runs to 856 residues: V-type proton ATPase subunit a (856 aa).

The Cytoplasmic portion of the chain corresponds to 1–409 (MAPKQDTPFR…NAYGTATYQE (409 aa)). A helical transmembrane segment spans residues 410–428 (VNPAIPVIVTFPFLFAVMF). Residues 429 to 430 (GD) lie on the Vacuolar side of the membrane. The helical transmembrane segment at 431 to 447 (FGHALIMLCAALAMIYW) threads the bilayer. At 448–460 (EKPLKKVTFELFA) the chain is on the cytoplasmic side. A helical transmembrane segment spans residues 461 to 490 (MVFYGRYIVLVMAVFSVYTGLIYNDVFSKS). Over 491–544 (MTLFDSQWKWVVPENFKEGMTVKAVLREPNGYRYPFGLDWRWHGTENELLFINS) the chain is Vacuolar. A helical transmembrane segment spans residues 545 to 564 (YKMKMAIILGWAHMTYSLCF). The Cytoplasmic portion of the chain corresponds to 565–582 (SYINARHFKRPIDIWGNF). Residues 583–603 (VPGMIFFQSIFGYLVLCIIYK) form a helical membrane-spanning segment. Residues 604–648 (WSVDWFGTGRQPPGLLNMLIYMFLQPGTLDGGVELYPGQATVQVI) are Vacuolar-facing. The helical transmembrane segment at 649–668 (LLLLAVIQVPILLFLKPFYL) threads the bilayer. Residues 669–738 (RWENNRARAK…EVMIHQVIHT (70 aa)) lie on the Cytoplasmic side of the membrane. Residues 689–710 (VSALDEDDEEDPSNGDDYEGAA) form a disordered region. The segment covering 692 to 707 (LDEDDEEDPSNGDDYE) has biased composition (acidic residues). A helical membrane pass occupies residues 739-763 (IEFCLNSVSHTASYLRLWALSLAHQ). Over 764–784 (QLSAVLWSMTMAKALESKGLG) the chain is Vacuolar. Residues 785–823 (GAIFLVVAFAMFFVLSVIILIIMEGVSAMLHSLRLAWVE) form a helical membrane-spanning segment. Topologically, residues 824–856 (SFSKFAEFGGWPFTPFSFKQQLEESEELKEYIG) are cytoplasmic.

It belongs to the V-ATPase 116 kDa subunit family. As to quaternary structure, V-ATPase is a heteromultimeric enzyme composed of a peripheral catalytic V1 complex (components A to H) attached to an integral membrane V0 proton pore complex (components: a, c, c', c'', d, e, f and VOA1).

Its subcellular location is the vacuole membrane. Functionally, subunit of the V0 complex of vacuolar(H+)-ATPase (V-ATPase), a multisubunit enzyme composed of a peripheral complex (V1) that hydrolyzes ATP and a membrane integral complex (V0) that translocates protons. V-ATPase is responsible for acidifying and maintaining the pH of intracellular compartments. This is V-type proton ATPase subunit a (vph-1) from Neurospora crassa (strain ATCC 24698 / 74-OR23-1A / CBS 708.71 / DSM 1257 / FGSC 987).